The chain runs to 75 residues: Supwaprin-a (75 aa).

Residues 1-24 (MSSGGLLLLLGFLTLWAELTPVSG) form the signal peptide. Residues 27–72 (RPKKPGLCPPRPQKPPCVRECKNDWSCPGEQKCCRYGCIFECRDPI) form the WAP domain. Cystine bridges form between Cys-34–Cys-60, Cys-43–Cys-64, Cys-47–Cys-59, and Cys-53–Cys-68.

This sequence belongs to the venom waprin family. In terms of tissue distribution, expressed by the venom gland.

It is found in the secreted. Functionally, damages membranes of susceptible bacteria. Has no hemolytic activity. Not toxic to mice. Does not inhibit the proteinases elastase and cathepsin G. This chain is Supwaprin-a, found in Austrelaps superbus (Lowland copperhead snake).